The primary structure comprises 625 residues: Tumor necrosis factor receptor superfamily member 11A (625 aa).

A signal peptide spans 1 to 30 (MAPRARRRRQLPAPLLALCVLLVPLQVTLQ). Residues 31-214 (VTPPCTQERH…PKEAQAYLPS (184 aa)) are Extracellular-facing. Cystine bridges form between cysteine 35–cysteine 47, cysteine 48–cysteine 61, cysteine 51–cysteine 69, cysteine 72–cysteine 87, cysteine 93–cysteine 113, cysteine 115–cysteine 128, cysteine 125–cysteine 127, cysteine 134–cysteine 152, and cysteine 155–cysteine 170. TNFR-Cys repeat units lie at residues 35–69 (CTQE…DSVC), 72–113 (CGPD…PRRC), 115–152 (CTAG…DTVC), and 155–195 (CLLG…DVVC). Asparagine 106 carries N-linked (GlcNAc...) asparagine glycosylation. Na(+) contacts are provided by cysteine 134, alanine 135, phenylalanine 138, serine 161, and valine 163. Asparagine 175 is a glycosylation site (N-linked (GlcNAc...) asparagine). Cysteine 176 and cysteine 195 form a disulfide bridge. A helical membrane pass occupies residues 215–234 (LIVLLLFISVVVVAAIIFGV). Over 235–625 (YYRKGGKALT…HTQGSGQCAE (391 aa)) the chain is Cytoplasmic. Disordered regions lie at residues 331 to 356 (TQGD…STGS), 388 to 413 (GTES…MPVS), and 479 to 524 (SMAE…FISS). The segment covering 499–511 (SGSSPSDQPPASG) has biased composition (low complexity). A compositionally biased stretch (polar residues) spans 512–524 (NVTGNSNSTFISS). The interval 532-537 (GDIIVV) is required for interaction with EEIG1 and osteoclast differentiation. The disordered stretch occupies residues 542-625 (TSQEGPGSAE…HTQGSGQCAE (84 aa)). Positions 543 to 558 (SQEGPGSAEPESEPVG) are enriched in low complexity. Residues 561–571 (VQEETLAHRDS) show a composition bias toward basic and acidic residues. Serine 571 is modified (phosphoserine). Positions 603-625 (RPVQEQGGAQTSLHTQGSGQCAE) are enriched in polar residues.

In terms of assembly, binds to the clefts between the subunits of the TNFSF11 ligand trimer to form a heterohexamer. Part of a complex composed of EEIG1, TNFRSF11A/RANK, PLCG2, GAB2, TEC and BTK; complex formation increases in the presence of TNFSF11/RANKL. Interacts with TRAF1, TRAF2, TRAF3, TRAF5 and TRAF6. Interacts (via cytoplasmic domain) with GAB2. Interacts (via cytoplasmic domain); with EEIG1 (via N-terminus); when in the presence of TNFSF11/RANKL. As to expression, ubiquitous expression with high levels in trabecular bone, thymus, small intestine, lung, brain and kidney. Weakly expressed in spleen and bone marrow.

The protein localises to the cell membrane. The protein resides in the membrane raft. In terms of biological role, receptor for TNFSF11/RANKL/TRANCE/OPGL; essential for RANKL-mediated osteoclastogenesis. Its interaction with EEIG1 promotes osteoclastogenesis via facilitating the transcription of NFATC1 and activation of PLCG2. Involved in the regulation of interactions between T-cells and dendritic cells. This Mus musculus (Mouse) protein is Tumor necrosis factor receptor superfamily member 11A (Tnfrsf11a).